Reading from the N-terminus, the 274-residue chain is MTMQDKEPSAPACRVIVITSGKGGVGKTTATANLGMCIARLGYRVALIDADIGLRNLDLLLGLENRVVYTAMEVIEGQCRLEQALIRDKRWKNLSMLAMSKNRQRYNMTRKNMMMIVDSIKERGYQYILIDCPAGIDAGFVNAIAPADEAILVTTPEITAIRDADRVAGLLEANDFYNVRLVANRVRPEMIQQNDMMSVDDVQGMIGVPLLGAIPEDKNVIISTNRGEPLVCQKTITLAGVAFEEAARRLVGLPSPSDSAPSRGWFAAIRRLWS.

22 to 29 (KGGVGKTT) lines the ATP pocket.

This sequence belongs to the ParA family. MinD subfamily.

It is found in the plastid. Its subcellular location is the chloroplast. ATPase required for the correct placement of the division site. The chain is Putative septum site-determining protein MinD (minD-A) from Nephroselmis olivacea (Green alga).